A 432-amino-acid chain; its full sequence is Enolase (432 aa).

Glutamine 166 provides a ligand contact to (2R)-2-phosphoglycerate. The active-site Proton donor is the glutamate 208. Aspartate 245, glutamate 291, and aspartate 318 together coordinate Mg(2+). (2R)-2-phosphoglycerate is bound by residues lysine 343, arginine 372, serine 373, and lysine 394. Catalysis depends on lysine 343, which acts as the Proton acceptor.

The protein belongs to the enolase family. Requires Mg(2+) as cofactor.

The protein resides in the cytoplasm. It is found in the secreted. Its subcellular location is the cell surface. It catalyses the reaction (2R)-2-phosphoglycerate = phosphoenolpyruvate + H2O. The protein operates within carbohydrate degradation; glycolysis; pyruvate from D-glyceraldehyde 3-phosphate: step 4/5. Functionally, catalyzes the reversible conversion of 2-phosphoglycerate (2-PG) into phosphoenolpyruvate (PEP). It is essential for the degradation of carbohydrates via glycolysis. This chain is Enolase, found in Leptospira interrogans serogroup Icterohaemorrhagiae serovar copenhageni (strain Fiocruz L1-130).